A 225-amino-acid chain; its full sequence is PKHD-type hydroxylase YbiX (225 aa).

Residues 78–177 (TLSTPLFNRY…RVASFMWIQS (100 aa)) form the Fe2OG dioxygenase domain. 3 residues coordinate Fe cation: H96, D98, and H158. A 2-oxoglutarate-binding site is contributed by R168.

Requires Fe(2+) as cofactor. L-ascorbate is required as a cofactor.

This is PKHD-type hydroxylase YbiX from Escherichia coli (strain 55989 / EAEC).